The sequence spans 204 residues: Protein Nef (204 aa).

The tract at residues 1 to 27 (MGNKWSKSWPQVRDRMRRAAPAPAADG) is disordered. Glycine 2 carries the N-myristoyl glycine; by host lipid modification. Position 6 is a phosphoserine; by host (serine 6). An acidic; interacts with host PACS1 and PACS2; stabilizes the interaction of NEF/MHC-I with host AP1M1; necessary for MHC-I internalization region spans residues 60-63 (TEEE). The tract at residues 67-76 (PVRPQVPLRP) is SH3-binding; interaction with Src family tyrosine kinases. Residues 70 to 73 (PQVP) carry the PxxP; stabilizes the interaction of NEF/MHC-I with host AP1M1; necessary for MHC-I internalization motif. Positions 106-122 (EILDLWVHNTQGYFPDW) are mediates dimerization, Nef-PTE1 interaction. The interval 146–178 (VDPSEVEEANEGENNCLLHPACQHGIEDEEREV) is binding to ATP6V1H. The Dileucine internalization motif; necessary for CD4 internalization signature appears at 162–163 (LL). The Diacidic; necessary for CD4 internalization motif lies at 172–173 (ED).

It belongs to the lentivirus primate group Nef protein family. Monomer; cytosolic form. Homodimer; membrane bound form. Interacts with Nef associated p21-activated kinase (PAK2); this interaction activates PAK2. Associates with the Nef-MHC-I-AP1 complex; this complex is required for MHC-I internalization. Interacts (via C-terminus) with host PI3-kinase. Interacts with host PACS1; this interaction seems to be weak. Interacts with host PACS2. Interacts with host LCK and MAPK3; these interactions inhibit the kinase activity of the latter. Interacts with host ATP6V1H; this interaction may play a role in CD4 endocytosis. Associates with the CD4-Nef-AP2 complex; this complex is required for CD4 internalization. Interacts with host AP2 subunit alpha and AP2 subunit sigma2. Interacts with TCR-zeta chain; this interaction up-regulates the Fas ligand (FasL) surface expression. Interacts with host HCK, LYN, and SRC; these interactions activate the Src family kinases. Interacts with MAP3K5; this interaction inhibits the Fas and TNFR-mediated death signals. Interacts with beta-COP and PTE1. Interacts with human RACK1; this increases Nef phosphorylation by PKC. Interacts with TP53; this interaction decreases the half-life of TP53, protecting the infected cell against p53-mediated apoptosis. The virion-associated Nef proteins are cleaved by the viral protease to release the soluble C-terminal core protein. Nef is probably cleaved concomitantly with viral structural proteins on maturation of virus particles. Post-translationally, myristoylated. In terms of processing, phosphorylated on serine residues, probably by host PKCdelta and theta.

It localises to the host cell membrane. Its subcellular location is the virion. The protein localises to the secreted. It is found in the host Golgi apparatus membrane. Factor of infectivity and pathogenicity, required for optimal virus replication. Alters numerous pathways of T-lymphocyte function and down-regulates immunity surface molecules in order to evade host defense and increase viral infectivity. Alters the functionality of other immunity cells, like dendritic cells, monocytes/macrophages and NK cells. Functionally, in infected CD4(+) T-lymphocytes, down-regulates the surface MHC-I, mature MHC-II, CD4, CD28, CCR5 and CXCR4 molecules. Mediates internalization and degradation of host CD4 through the interaction of with the cytoplasmic tail of CD4, the recruitment of AP-2 (clathrin adapter protein complex 2), internalization through clathrin coated pits, and subsequent transport to endosomes and lysosomes for degradation. Diverts host MHC-I molecules to the trans-Golgi network-associated endosomal compartments by an endocytic pathway to finally target them for degradation. MHC-I down-regulation may involve AP-1 (clathrin adapter protein complex 1) or possibly Src family kinase-ZAP70/Syk-PI3K cascade recruited by PACS2. In consequence infected cells are masked for immune recognition by cytotoxic T-lymphocytes. Decreasing the number of immune receptors also prevents reinfection by more HIV particles (superinfection). Down-regulates host SERINC3 and SERINC5 thereby excluding these proteins from the viral particles. Virion infectivity is drastically higher when SERINC3 or SERINC5 are excluded from the viral envelope, because these host antiviral proteins impair the membrane fusion event necessary for subsequent virion penetration. In terms of biological role, bypasses host T-cell signaling by inducing a transcriptional program nearly identical to that of anti-CD3 cell activation. Interaction with TCR-zeta chain up-regulates the Fas ligand (FasL). Increasing surface FasL molecules and decreasing surface MHC-I molecules on infected CD4(+) cells send attacking cytotoxic CD8+ T-lymphocytes into apoptosis. Its function is as follows. Plays a role in optimizing the host cell environment for viral replication without causing cell death by apoptosis. Protects the infected cells from apoptosis in order to keep them alive until the next virus generation is ready to strike. Inhibits the Fas and TNFR-mediated death signals by blocking MAP3K5/ASK1. Decreases the half-life of TP53, protecting the infected cell against p53-mediated apoptosis. Inhibits the apoptotic signals regulated by the Bcl-2 family proteins through the formation of a Nef/PI3-kinase/PAK2 complex that leads to activation of PAK2 and induces phosphorylation of host BAD. Extracellular Nef protein targets CD4(+) T-lymphocytes for apoptosis by interacting with CXCR4 surface receptors. This chain is Protein Nef, found in Homo sapiens (Human).